Consider the following 20-residue polypeptide: Superoxide dismutase [Fe] (20 aa).

The protein belongs to the iron/manganese superoxide dismutase family. Homodimer. It depends on Fe cation as a cofactor.

The protein resides in the periplasm. It catalyses the reaction 2 superoxide + 2 H(+) = H2O2 + O2. In terms of biological role, destroys superoxide anion radicals which are normally produced within the cells and which are toxic to biological systems. This chain is Superoxide dismutase [Fe] (sodB), found in Photobacterium damsela subsp. piscicida (Pasteurella piscicida).